A 164-amino-acid polypeptide reads, in one-letter code: uncharacterized protein (164 aa).

The next 4 helical transmembrane spans lie at 25 to 45 (QFGF…PLLG), 63 to 83 (GMAV…VYIV), 120 to 140 (FWTA…ADFF), and 141 to 161 (TVQM…LMMM).

This sequence belongs to the major facilitator superfamily.

The protein localises to the cell membrane. This is an uncharacterized protein from Bacillus subtilis (strain 168).